Here is a 303-residue protein sequence, read N- to C-terminus: Porphobilinogen deaminase (303 aa).

Position 240 is an S-(dipyrrolylmethanemethyl)cysteine (cysteine 240).

Belongs to the HMBS family. As to quaternary structure, monomer. The cofactor is dipyrromethane.

It carries out the reaction 4 porphobilinogen + H2O = hydroxymethylbilane + 4 NH4(+). The protein operates within porphyrin-containing compound metabolism; protoporphyrin-IX biosynthesis; coproporphyrinogen-III from 5-aminolevulinate: step 2/4. Functionally, tetrapolymerization of the monopyrrole PBG into the hydroxymethylbilane pre-uroporphyrinogen in several discrete steps. This chain is Porphobilinogen deaminase, found in Stenotrophomonas maltophilia (strain R551-3).